Reading from the N-terminus, the 176-residue chain is MMNLWKDLEPGPNPPDVVYAVIEIPRGSRNKYEYDEERGFFKLDRVLYSPFHYPLDYGFIPRTLYDDGDPLDILVIMQDPTFPGCVIEARPIGLMKMLDDSDQDDKVLAVPTEDPRFKDVKDLDDVPKHLLDEIAHMFSEYKRLEGKETEVLGWEGADAAKEAIVHAIELYEEEHG.

The substrate site is built by K31, R45, and Y57. Mg(2+) is bound by residues D67, D72, and D104. Y141 is a binding site for substrate.

Belongs to the PPase family. In terms of assembly, homohexamer. Requires Mg(2+) as cofactor.

It localises to the cytoplasm. It catalyses the reaction diphosphate + H2O = 2 phosphate + H(+). Its function is as follows. Catalyzes the hydrolysis of inorganic pyrophosphate (PPi) forming two phosphate ions. This is Inorganic pyrophosphatase from Methanopyrus kandleri (strain AV19 / DSM 6324 / JCM 9639 / NBRC 100938).